An 82-amino-acid polypeptide reads, in one-letter code: ATP synthase subunit c (82 aa).

The next 2 membrane-spanning stretches (helical) occupy residues 7 to 27 (AASVLAAALAVGLAAIGPGIG) and 57 to 77 (LAFMEALTIYGLVVALVLLFA).

Belongs to the ATPase C chain family. As to quaternary structure, F-type ATPases have 2 components, F(1) - the catalytic core - and F(0) - the membrane proton channel. F(1) has five subunits: alpha(3), beta(3), gamma(1), delta(1), epsilon(1). F(0) has four main subunits: a(1), b(1), b'(1) and c(10-14). The alpha and beta chains form an alternating ring which encloses part of the gamma chain. F(1) is attached to F(0) by a central stalk formed by the gamma and epsilon chains, while a peripheral stalk is formed by the delta, b and b' chains.

It is found in the cellular thylakoid membrane. In terms of biological role, f(1)F(0) ATP synthase produces ATP from ADP in the presence of a proton or sodium gradient. F-type ATPases consist of two structural domains, F(1) containing the extramembraneous catalytic core and F(0) containing the membrane proton channel, linked together by a central stalk and a peripheral stalk. During catalysis, ATP synthesis in the catalytic domain of F(1) is coupled via a rotary mechanism of the central stalk subunits to proton translocation. Its function is as follows. Key component of the F(0) channel; it plays a direct role in translocation across the membrane. A homomeric c-ring of between 10-14 subunits forms the central stalk rotor element with the F(1) delta and epsilon subunits. In Synechococcus sp. (strain WH7803), this protein is ATP synthase subunit c.